A 256-amino-acid chain; its full sequence is Dihydromonacolin L-[lovastatin nonaketide synthase] thioesterase (256 aa).

Catalysis depends on charge relay system residues Ser122, Asp201, and His229.

This sequence belongs to the LovG family.

It catalyses the reaction dihydromonacolin L-[lovastatin nonaketide synthase] + H2O = holo-[lovastatin nonaketide synthase] + dihydromonacolin L carboxylate + H(+). It participates in polyketide biosynthesis; lovastatin biosynthesis. In terms of biological role, esterase; part of the gene cluster that mediates the biosynthesis of lovastatin (also known as mevinolin, mevacor or monacolin K), a hypolipidemic inhibitor of (3S)-hydroxymethylglutaryl-coenzyme A (HMG-CoA) reductase (HMGR). The first step in the biosynthesis of lovastatin is the production of dihydromonacolin L acid by the lovastatin nonaketide synthase lovB and the trans-acting enoyl reductase lovC via condensation of one acetyl-CoA unit and 8 malonyl-CoA units. Dihydromonacolin L acid is released from lovB by the thioesterase lovG. Next, dihydromonacolin L acid is oxidized by the dihydromonacolin L monooxygenase lovA twice to form monacolin J acid. The 2-methylbutyrate moiety of lovastatin is synthesized by the lovastatin diketide synthase lovF via condensation of one acetyl-CoA unit and one malonyl-CoA unit. Finally, the covalent attachment of this moiety to monacolin J acid is catalyzed by the transesterase lovD to yield lovastatin. LovD has broad substrate specificity and can also convert monacolin J to simvastatin using alpha-dimethylbutanoyl-S-methyl-3-mercaptopropionate (DMB-S-MMP) as the thioester acyl donor, and can also catalyze the reverse reaction and function as hydrolase in vitro. LovD has much higher activity with LovF-bound 2-methylbutanoate than with free diketide substrates. Its function is as follows. Esterase that catalyzes the release of covalently bound dihydromonacolin L from LovB during lovastatin biosynthesis. The chain is Dihydromonacolin L-[lovastatin nonaketide synthase] thioesterase from Aspergillus terreus.